The primary structure comprises 418 residues: Glutamyl-tRNA reductase (418 aa).

Substrate-binding positions include 51-54 (TCNR), Ser-107, 112-114 (EPQ), and Gln-118. The active-site Nucleophile is Cys-52. An NADP(+)-binding site is contributed by 187 to 192 (GAGETA).

This sequence belongs to the glutamyl-tRNA reductase family. As to quaternary structure, homodimer.

It carries out the reaction (S)-4-amino-5-oxopentanoate + tRNA(Glu) + NADP(+) = L-glutamyl-tRNA(Glu) + NADPH + H(+). The protein operates within porphyrin-containing compound metabolism; protoporphyrin-IX biosynthesis; 5-aminolevulinate from L-glutamyl-tRNA(Glu): step 1/2. Functionally, catalyzes the NADPH-dependent reduction of glutamyl-tRNA(Glu) to glutamate 1-semialdehyde (GSA). This chain is Glutamyl-tRNA reductase, found in Dichelobacter nodosus (strain VCS1703A).